Consider the following 83-residue polypeptide: Protein ShK-like4 (83 aa).

The signal sequence occupies residues Met-1–Ala-21. A propeptide spanning residues Leu-22 to Arg-48 is cleaved from the precursor. Intrachain disulfides connect Cys-50–Cys-82, Cys-57–Cys-75, and Cys-67–Cys-79. Residues Cys-50–Glu-83 enclose the ShKT domain.

Post-translationally, contains 3 disulfide bonds. As to expression, expressed in various neurons (ectodermal sensory cells) (in planulae and primary polyps). Not expressed in nematocytes.

Probable neuropeptide. The chain is Protein ShK-like4 from Nematostella vectensis (Starlet sea anemone).